Here is a 150-residue protein sequence, read N- to C-terminus: 3-dehydroquinate dehydratase (150 aa).

Tyrosine 26 functions as the Proton acceptor in the catalytic mechanism. 3 residues coordinate substrate: asparagine 77, histidine 83, and aspartate 90. Histidine 103 functions as the Proton donor in the catalytic mechanism. Substrate is bound by residues 104–105 (LS) and arginine 114.

The protein belongs to the type-II 3-dehydroquinase family. Homododecamer.

It carries out the reaction 3-dehydroquinate = 3-dehydroshikimate + H2O. The protein operates within metabolic intermediate biosynthesis; chorismate biosynthesis; chorismate from D-erythrose 4-phosphate and phosphoenolpyruvate: step 3/7. Its function is as follows. Catalyzes a trans-dehydration via an enolate intermediate. In Mannheimia succiniciproducens (strain KCTC 0769BP / MBEL55E), this protein is 3-dehydroquinate dehydratase.